The primary structure comprises 338 residues: Anthranilate phosphoribosyltransferase (338 aa).

5-phospho-alpha-D-ribose 1-diphosphate is bound by residues G81, 84 to 85 (GD), S89, 91 to 94 (NVST), 109 to 117 (KHGNRALSS), and A121. G81 lines the anthranilate pocket. S93 contacts Mg(2+). Residue N112 participates in anthranilate binding. An anthranilate-binding site is contributed by R167. Mg(2+) contacts are provided by D226 and E227.

This sequence belongs to the anthranilate phosphoribosyltransferase family. As to quaternary structure, homodimer. Mg(2+) is required as a cofactor.

It catalyses the reaction N-(5-phospho-beta-D-ribosyl)anthranilate + diphosphate = 5-phospho-alpha-D-ribose 1-diphosphate + anthranilate. The protein operates within amino-acid biosynthesis; L-tryptophan biosynthesis; L-tryptophan from chorismate: step 2/5. Functionally, catalyzes the transfer of the phosphoribosyl group of 5-phosphorylribose-1-pyrophosphate (PRPP) to anthranilate to yield N-(5'-phosphoribosyl)-anthranilate (PRA). This is Anthranilate phosphoribosyltransferase from Rhodopseudomonas palustris (strain ATCC BAA-98 / CGA009).